The chain runs to 908 residues: Metabotropic glutamate receptor 8 (908 aa).

An N-terminal signal peptide occupies residues 1 to 33; the sequence is MVCEGKRSASCPCFFLLTAKFYWILTMMQRTHS. Over 34-583 the chain is Extracellular; it reads QEYAHSIRVD…IIKLEWHSPW (550 aa). Cys64 and Cys106 are joined by a disulfide. Asn95 carries an N-linked (GlcNAc...) asparagine glycan. Residues Ser156, 177 to 179, and Tyr227 each bind L-glutamate; that span reads AST. 7 disulfide bridges follow: Cys246/Cys534, Cys369/Cys384, Cys424/Cys431, Cys516/Cys535, Cys520/Cys538, Cys541/Cys553, and Cys556/Cys569. Residue Asn298 is glycosylated (N-linked (GlcNAc...) asparagine). Asp309 contacts L-glutamate. Lys401 is a binding site for L-glutamate. N-linked (GlcNAc...) asparagine glycans are attached at residues Asn452 and Asn480. N-linked (GlcNAc...) asparagine glycosylation is present at Asn565. The helical transmembrane segment at 584–608 threads the bilayer; sequence AVVPVFVAILGIIATTFVIVTFVRY. At 609–620 the chain is on the cytoplasmic side; the sequence is NDTPIVRASGRE. The chain crosses the membrane as a helical span at residues 621–641; it reads LSYVLLTGIFLCYSITFLMIA. The Extracellular segment spans residues 642-647; the sequence is APDTII. Residues 648 to 668 form a helical membrane-spanning segment; sequence CSFRRVFLGLGMCFSYAALLT. Topologically, residues 669-695 are cytoplasmic; the sequence is KTNRIHRIFEQGKKSVTAPKFISPASQ. Residues 696–716 traverse the membrane as a helical segment; it reads LVITFSLISVQLLGVFVWFVV. Residues 717–746 are Extracellular-facing; that stretch reads DPPHIIIDYGEQRTLDPEKARGVLKCDISD. Residues 747 to 768 traverse the membrane as a helical segment; sequence LSLICSLGYSILLMVTCTVYAI. Residues 769-781 lie on the Cytoplasmic side of the membrane; it reads KTRGVPETFNEAK. Residues 782-803 form a helical membrane-spanning segment; it reads PIGFTMYTTCIIWLAFIPIFFG. Over 804–818 the chain is Extracellular; sequence TAQSAEKMYIQTTTL. Residues 819–843 form a helical membrane-spanning segment; sequence TVSMSLSASVSLGMLYMPKVYIIIF. Topologically, residues 844 to 908 are cytoplasmic; that stretch reads HPEQNVQKRK…TYISYSNHSI (65 aa). A Glycyl lysine isopeptide (Lys-Gly) (interchain with G-Cter in SUMO1) cross-link involves residue Lys882.

This sequence belongs to the G-protein coupled receptor 3 family. As to quaternary structure, interacts with PICK1.

It is found in the cell membrane. Its function is as follows. G-protein coupled receptor for glutamate. Ligand binding causes a conformation change that triggers signaling via guanine nucleotide-binding proteins (G proteins) and modulates the activity of down-stream effectors, such as adenylate cyclase. Signaling inhibits adenylate cyclase activity. This is Metabotropic glutamate receptor 8 (GRM8) from Homo sapiens (Human).